Here is a 187-residue protein sequence, read N- to C-terminus: UPF0301 protein PC1_3712 (187 aa).

This sequence belongs to the UPF0301 (AlgH) family.

The sequence is that of UPF0301 protein PC1_3712 from Pectobacterium carotovorum subsp. carotovorum (strain PC1).